Consider the following 132-residue polypeptide: Small ribosomal subunit protein uS8 (132 aa).

It belongs to the universal ribosomal protein uS8 family. As to quaternary structure, part of the 30S ribosomal subunit. Contacts proteins S5 and S12.

Its function is as follows. One of the primary rRNA binding proteins, it binds directly to 16S rRNA central domain where it helps coordinate assembly of the platform of the 30S subunit. In Brucella ovis (strain ATCC 25840 / 63/290 / NCTC 10512), this protein is Small ribosomal subunit protein uS8.